The sequence spans 179 residues: Large ribosomal subunit protein uL5 (179 aa).

Belongs to the universal ribosomal protein uL5 family. As to quaternary structure, part of the 50S ribosomal subunit; part of the 5S rRNA/L5/L18/L25 subcomplex. Contacts the 5S rRNA and the P site tRNA. Forms a bridge to the 30S subunit in the 70S ribosome.

Functionally, this is one of the proteins that bind and probably mediate the attachment of the 5S RNA into the large ribosomal subunit, where it forms part of the central protuberance. In the 70S ribosome it contacts protein S13 of the 30S subunit (bridge B1b), connecting the 2 subunits; this bridge is implicated in subunit movement. Contacts the P site tRNA; the 5S rRNA and some of its associated proteins might help stabilize positioning of ribosome-bound tRNAs. This Edwardsiella ictaluri (strain 93-146) protein is Large ribosomal subunit protein uL5.